We begin with the raw amino-acid sequence, 148 residues long: UPF0260 protein ESA_01462 (148 aa).

The protein belongs to the UPF0260 family.

The protein is UPF0260 protein ESA_01462 of Cronobacter sakazakii (strain ATCC BAA-894) (Enterobacter sakazakii).